The primary structure comprises 318 residues: HPr kinase/phosphorylase (318 aa).

Active-site residues include histidine 146 and lysine 167. 161 to 168 (GESGLGKS) contacts ATP. Serine 168 contacts Mg(2+). Aspartate 185 functions as the Proton acceptor; for phosphorylation activity. Proton donor; for dephosphorylation activity in the catalytic mechanism. Residues 209 to 218 (LEVRGIGLLD) form an important for the catalytic mechanism of both phosphorylation and dephosphorylation region. Glutamate 210 is a binding site for Mg(2+). Arginine 252 is a catalytic residue. The tract at residues 273-278 (QVVAGR) is important for the catalytic mechanism of dephosphorylation.

Belongs to the HPrK/P family. Homohexamer. The cofactor is Mg(2+).

It carries out the reaction [HPr protein]-L-serine + ATP = [HPr protein]-O-phospho-L-serine + ADP + H(+). The catalysed reaction is [HPr protein]-O-phospho-L-serine + phosphate + H(+) = [HPr protein]-L-serine + diphosphate. In terms of biological role, catalyzes the ATP- as well as the pyrophosphate-dependent phosphorylation of a specific serine residue in HPr, a phosphocarrier protein of the phosphoenolpyruvate-dependent sugar phosphotransferase system (PTS). HprK/P also catalyzes the pyrophosphate-producing, inorganic phosphate-dependent dephosphorylation (phosphorolysis) of seryl-phosphorylated HPr (P-Ser-HPr). The polypeptide is HPr kinase/phosphorylase (Verminephrobacter eiseniae (strain EF01-2)).